Here is a 208-residue protein sequence, read N- to C-terminus: Uracil phosphoribosyltransferase (208 aa).

Residues Arg-78, Arg-103, and Asp-130 to Ser-138 each bind 5-phospho-alpha-D-ribose 1-diphosphate. Uracil contacts are provided by residues Ile-193 and Gly-198–Ala-200. Asp-199 contributes to the 5-phospho-alpha-D-ribose 1-diphosphate binding site.

This sequence belongs to the UPRTase family. Mg(2+) serves as cofactor.

It catalyses the reaction UMP + diphosphate = 5-phospho-alpha-D-ribose 1-diphosphate + uracil. Its pathway is pyrimidine metabolism; UMP biosynthesis via salvage pathway; UMP from uracil: step 1/1. With respect to regulation, allosterically activated by GTP. Functionally, catalyzes the conversion of uracil and 5-phospho-alpha-D-ribose 1-diphosphate (PRPP) to UMP and diphosphate. In Brucella melitensis biotype 2 (strain ATCC 23457), this protein is Uracil phosphoribosyltransferase.